A 267-amino-acid chain; its full sequence is Heme-containing CO-sensing transcriptional regulator RcoM 2 (267 aa).

The PAS domain maps to 15–86; the sequence is RAETFQHKLE…KSRDKLRFLL (72 aa). Heme is bound by residues His74 and Met104. The HTH LytTR-type domain occupies 161 to 266; that stretch reads IPVYRKSRVI…TAQLKELLGV (106 aa).

Heme is required as a cofactor.

It is found in the cytoplasm. Its function is as follows. One-component, b-type heme-containing aerobic sensor and transcriptional regulator that responds to CO by activating the expression of the oxidation operon cox. The protein is Heme-containing CO-sensing transcriptional regulator RcoM 2 (rcoM2) of Paraburkholderia xenovorans (strain LB400).